Reading from the N-terminus, the 305-residue chain is tRNA uridine(34) hydroxylase (305 aa).

Residues 125 to 219 (ADENTVVVDT…YLEEVPREQS (95 aa)) form the Rhodanese domain. The Cysteine persulfide intermediate role is filled by Cys179.

Belongs to the TrhO family.

The catalysed reaction is uridine(34) in tRNA + AH2 + O2 = 5-hydroxyuridine(34) in tRNA + A + H2O. Catalyzes oxygen-dependent 5-hydroxyuridine (ho5U) modification at position 34 in tRNAs. This Brucella canis (strain ATCC 23365 / NCTC 10854 / RM-666) protein is tRNA uridine(34) hydroxylase.